The sequence spans 424 residues: L-glutamine:2-deoxy-scyllo-inosose aminotransferase (424 aa).

An N6-(pyridoxal phosphate)lysine modification is found at Lys-202.

This sequence belongs to the DegT/DnrJ/EryC1 family. L-glutamine:2-deoxy-scyllo-inosose/scyllo-inosose aminotransferase subfamily. Pyridoxal 5'-phosphate serves as cofactor.

It carries out the reaction 2-deoxy-L-scyllo-inosose + L-glutamine = 2-deoxy-scyllo-inosamine + 2-oxoglutaramate. The catalysed reaction is 3-amino-2,3-dideoxy-scyllo-inosose + L-glutamine = 2-deoxystreptamine + 2-oxoglutaramate. The protein operates within metabolic intermediate biosynthesis; 2-deoxystreptamine biosynthesis; 2-deoxystreptamine from D-glucose 6-phosphate: step 2/4. It functions in the pathway antibiotic biosynthesis; tobramycin biosynthesis. Functionally, catalyzes the PLP-dependent transamination of 2-deoxy-scyllo-inosose (2-DOI) to form 2-deoxy-scyllo-inosamine (2-DOIA) using L-glutamine as the amino donor. Also catalyzes the transamination of 3-amino-2,3-dideoxy-scyllo-inosose (keto-2-DOIA) into 2-deoxystreptamine (2-DOS). This Streptoalloteichus tenebrarius (strain ATCC 17920 / DSM 40477 / JCM 4838 / CBS 697.72 / NBRC 16177 / NCIMB 11028 / NRRL B-12390 / A12253. 1 / ISP 5477) (Streptomyces tenebrarius) protein is L-glutamine:2-deoxy-scyllo-inosose aminotransferase (tbmB).